Consider the following 95-residue polypeptide: Integration host factor subunit beta (95 aa).

Residues 56–95 (RAPRTGRNPKTGETVELDGKHVPHFKPGKELRDRVNESIA) are disordered. Over residues 72 to 95 (LDGKHVPHFKPGKELRDRVNESIA) the composition is skewed to basic and acidic residues.

The protein belongs to the bacterial histone-like protein family. As to quaternary structure, heterodimer of an alpha and a beta chain.

In terms of biological role, this protein is one of the two subunits of integration host factor, a specific DNA-binding protein that functions in genetic recombination as well as in transcriptional and translational control. The sequence is that of Integration host factor subunit beta from Pseudoalteromonas translucida (strain TAC 125).